A 148-amino-acid chain; its full sequence is Deoxyuridine 5'-triphosphate nucleotidohydrolase (148 aa).

Substrate contacts are provided by residues 67-69, asparagine 80, 84-86, and lysine 94; these read RSG and TID.

The protein belongs to the dUTPase family. Requires Mg(2+) as cofactor.

The enzyme catalyses dUTP + H2O = dUMP + diphosphate + H(+). The protein operates within pyrimidine metabolism; dUMP biosynthesis; dUMP from dCTP (dUTP route): step 2/2. In terms of biological role, this enzyme is involved in nucleotide metabolism: it produces dUMP, the immediate precursor of thymidine nucleotides and it decreases the intracellular concentration of dUTP so that uracil cannot be incorporated into DNA. This is Deoxyuridine 5'-triphosphate nucleotidohydrolase from Orientia tsutsugamushi (strain Ikeda) (Rickettsia tsutsugamushi).